A 122-amino-acid chain; its full sequence is Large ribosomal subunit protein uL14 (122 aa).

The protein belongs to the universal ribosomal protein uL14 family. Part of the 50S ribosomal subunit. Forms a cluster with proteins L3 and L19. In the 70S ribosome, L14 and L19 interact and together make contacts with the 16S rRNA in bridges B5 and B8.

In terms of biological role, binds to 23S rRNA. Forms part of two intersubunit bridges in the 70S ribosome. This Salinibacter ruber (strain DSM 13855 / M31) protein is Large ribosomal subunit protein uL14.